We begin with the raw amino-acid sequence, 413 residues long: Peptidase T (413 aa).

Histidine 84 serves as a coordination point for Zn(2+). The active site involves aspartate 86. A Zn(2+)-binding site is contributed by aspartate 146. The active-site Proton acceptor is the glutamate 180. Zn(2+) is bound by residues glutamate 181, aspartate 203, and histidine 385.

It belongs to the peptidase M20B family. Requires Zn(2+) as cofactor.

The protein resides in the cytoplasm. The catalysed reaction is Release of the N-terminal residue from a tripeptide.. Cleaves the N-terminal amino acid of tripeptides. The protein is Peptidase T of Limosilactobacillus fermentum (strain NBRC 3956 / LMG 18251) (Lactobacillus fermentum).